Consider the following 208-residue polypeptide: Uracil phosphoribosyltransferase (208 aa).

5-phospho-alpha-D-ribose 1-diphosphate-binding positions include Arg-78, Arg-103, and Asp-130–Thr-138. Uracil-binding positions include Ile-193 and Gly-198–Ala-200. Residue Asp-199 coordinates 5-phospho-alpha-D-ribose 1-diphosphate.

This sequence belongs to the UPRTase family. The cofactor is Mg(2+).

The catalysed reaction is UMP + diphosphate = 5-phospho-alpha-D-ribose 1-diphosphate + uracil. The protein operates within pyrimidine metabolism; UMP biosynthesis via salvage pathway; UMP from uracil: step 1/1. Its activity is regulated as follows. Allosterically activated by GTP. In terms of biological role, catalyzes the conversion of uracil and 5-phospho-alpha-D-ribose 1-diphosphate (PRPP) to UMP and diphosphate. The chain is Uracil phosphoribosyltransferase from Desulfotalea psychrophila (strain LSv54 / DSM 12343).